The sequence spans 42 residues: Tachystatin-B1 (42 aa).

3 disulfides stabilise this stretch: C4–C20, C11–C25, and C19–C37.

Granular hemocytes, small secretory granules.

The protein resides in the secreted. In terms of biological role, exhibits stronger antimicrobial activity against the Gram-positive bacteria (S.aureus (IC(50) is 7.4 ug/ml)) and fungi (C.albicans (IC(50) is 3.0 ug/ml) and P.pastoris (IC(50) is 0.1 ug/ml)) than Gram-negative bacteria (E.coli no inhibition at 100 ug/ml). Binds to chitin (4.3 uM are required to obtain 50% of binding). Does not cause hemolysis on sheep erythrocytes. Has no blocking activity on the P-type calcium channel. This chain is Tachystatin-B1, found in Tachypleus tridentatus (Japanese horseshoe crab).